Here is a 161-residue protein sequence, read N- to C-terminus: MPSFDVVSEANMIEVKNAIEQSNKEISTRFDFKGSDARVEQKDRELTLFADDDFKLGQVKDVLIGKMAKRNVDVRFLDYGKVEKIGGDKVKQVVTVKKGVTGDLAKKIVRLVKDSKIKVQASIQGDAVRVSGAKRDDLQSVIAMLRKDVTDTPLDFNNFRD.

This sequence belongs to the YajQ family.

In terms of biological role, nucleotide-binding protein. The sequence is that of Nucleotide-binding protein Bmul_0741/BMULJ_02519 from Burkholderia multivorans (strain ATCC 17616 / 249).